Reading from the N-terminus, the 434-residue chain is Tryptamine hydroxycinnamoyltransferase 2 (434 aa).

Active-site proton acceptor residues include His-154 and Asp-380.

The protein belongs to the plant acyltransferase family.

In terms of biological role, hydroxycinnamoyl transferase that catalyzes the transfer of an acyl from p-coumaryol-CoA to tryptamine, to produce coumaroyl tryptamine. Serotonin and tyramine serve as acyl acceptors in vitro. Can use caffeoyl-CoA, and to a lesser extent feruloyl-CoA, as acyl donors. In Oryza sativa subsp. japonica (Rice), this protein is Tryptamine hydroxycinnamoyltransferase 2.